The chain runs to 284 residues: Shikimate dehydrogenase (NADP(+)) (284 aa).

Residues 20–22 (SIS) and Ser67 contribute to the shikimate site. Catalysis depends on Lys71, which acts as the Proton acceptor. Asp83 is an NADP(+) binding site. The shikimate site is built by Asn92 and Asp107. Residues 129-133 (GAGGA) and Ile227 contribute to the NADP(+) site. Position 229 (Tyr229) interacts with shikimate. Gly250 contacts NADP(+).

Belongs to the shikimate dehydrogenase family. As to quaternary structure, homodimer.

The catalysed reaction is shikimate + NADP(+) = 3-dehydroshikimate + NADPH + H(+). Its pathway is metabolic intermediate biosynthesis; chorismate biosynthesis; chorismate from D-erythrose 4-phosphate and phosphoenolpyruvate: step 4/7. In terms of biological role, involved in the biosynthesis of the chorismate, which leads to the biosynthesis of aromatic amino acids. Catalyzes the reversible NADPH linked reduction of 3-dehydroshikimate (DHSA) to yield shikimate (SA). The protein is Shikimate dehydrogenase (NADP(+)) of Streptococcus pneumoniae (strain Taiwan19F-14).